We begin with the raw amino-acid sequence, 355 residues long: GTP 3',8-cyclase (355 aa).

Residues 16–242 enclose the Radical SAM core domain; the sequence is RYGRRATDMR…PDPRARDGAP (227 aa). R25 is a binding site for GTP. Residues C32 and C36 each coordinate [4Fe-4S] cluster. Y38 provides a ligand contact to S-adenosyl-L-methionine. [4Fe-4S] cluster is bound at residue C39. R76 provides a ligand contact to GTP. An S-adenosyl-L-methionine-binding site is contributed by G80. Residue T107 participates in GTP binding. An S-adenosyl-L-methionine-binding site is contributed by S131. Residue K168 coordinates GTP. M202 contributes to the S-adenosyl-L-methionine binding site. C277 and C280 together coordinate [4Fe-4S] cluster. 282-284 contributes to the GTP binding site; it reads RTR. C294 serves as a coordination point for [4Fe-4S] cluster.

The protein belongs to the radical SAM superfamily. MoaA family. Monomer. [4Fe-4S] cluster is required as a cofactor.

The catalysed reaction is GTP + AH2 + S-adenosyl-L-methionine = (8S)-3',8-cyclo-7,8-dihydroguanosine 5'-triphosphate + 5'-deoxyadenosine + L-methionine + A + H(+). The protein operates within cofactor biosynthesis; molybdopterin biosynthesis. Catalyzes, together with MoaC, the conversion of 5'-GTP to cyclic pyranopterin monophosphate (cPMP or molybdopterin precursor Z). In terms of biological role, catalyzes the cyclization of GTP to (8S)-3',8-cyclo-7,8-dihydroguanosine 5'-triphosphate. In Paenarthrobacter nicotinovorans (Arthrobacter nicotinovorans), this protein is GTP 3',8-cyclase.